Here is a 651-residue protein sequence, read N- to C-terminus: LEAF RUST 10 DISEASE-RESISTANCE LOCUS RECEPTOR-LIKE PROTEIN KINASE-like 1.2 (651 aa).

Residues 1–26 (MNPSTPSLLYTSIFFYFTIIATQTLS) form the signal peptide. Residues 27–264 (LDPKFKACEP…NDKRRRVIVK (238 aa)) lie on the Extracellular side of the membrane. Residues asparagine 88, asparagine 114, asparagine 130, asparagine 136, asparagine 155, asparagine 193, and asparagine 213 are each glycosylated (N-linked (GlcNAc...) asparagine). The chain crosses the membrane as a helical span at residues 265–285 (VLIGASAAVVGLIAASIFWYV). Over 286–651 (YHRRKTKSYR…DSVIVKWDSK (366 aa)) the chain is Cytoplasmic. Residues 341–613 (FDPSKELGDG…PCMSHVQDTL (273 aa)) form the Protein kinase domain. Residues 347 to 355 (LGDGGFGTV) and lysine 369 each bind ATP. Tyrosine 415 is subject to Phosphotyrosine. Catalysis depends on aspartate 465, which acts as the Proton acceptor. The residue at position 498 (serine 498) is a Phosphoserine. A phosphothreonine mark is found at threonine 499 and threonine 504. Tyrosine 512 carries the post-translational modification Phosphotyrosine.

Belongs to the protein kinase superfamily. Ser/Thr protein kinase family.

It is found in the cell membrane. Its subcellular location is the membrane. It carries out the reaction L-seryl-[protein] + ATP = O-phospho-L-seryl-[protein] + ADP + H(+). The catalysed reaction is L-threonyl-[protein] + ATP = O-phospho-L-threonyl-[protein] + ADP + H(+). Its function is as follows. Probable receptor-like serine/threonine-protein kinase involved in abscisic acid (ABA) signaling. Acts as a positive regulator of abiotic stress response. The protein is LEAF RUST 10 DISEASE-RESISTANCE LOCUS RECEPTOR-LIKE PROTEIN KINASE-like 1.2 of Arabidopsis thaliana (Mouse-ear cress).